Reading from the N-terminus, the 190-residue chain is Threonylcarbamoyl-AMP synthase (190 aa).

One can recognise a YrdC-like domain in the interval 7 to 190; sequence TGSIAAVVDL…ALTGELFRQG (184 aa).

It belongs to the SUA5 family. TsaC subfamily.

It localises to the cytoplasm. The catalysed reaction is L-threonine + hydrogencarbonate + ATP = L-threonylcarbamoyladenylate + diphosphate + H2O. In terms of biological role, required for the formation of a threonylcarbamoyl group on adenosine at position 37 (t(6)A37) in tRNAs that read codons beginning with adenine. Catalyzes the conversion of L-threonine, HCO(3)(-)/CO(2) and ATP to give threonylcarbamoyl-AMP (TC-AMP) as the acyladenylate intermediate, with the release of diphosphate. The sequence is that of Threonylcarbamoyl-AMP synthase from Salmonella paratyphi A (strain ATCC 9150 / SARB42).